The chain runs to 2110 residues: Protein Ycf2 (2110 aa).

Position 1336–1343 (1336–1343 (GSIGTGRS)) interacts with ATP. The tract at residues 1852–1876 (EEEAELQDEEAELQDEGAGRKDEEA) is disordered. The span at 1854–1866 (EAELQDEEAELQD) shows a compositional bias: acidic residues.

The protein belongs to the Ycf2 family.

Its subcellular location is the plastid. It is found in the chloroplast stroma. In terms of biological role, probable ATPase of unknown function. Its presence in a non-photosynthetic plant (Epifagus virginiana) and experiments in tobacco indicate that it has an essential function which is probably not related to photosynthesis. In Pelargonium hortorum (Common geranium), this protein is Protein Ycf2 (ycf2-A).